The chain runs to 382 residues: Acetylornithine deacetylase (382 aa).

A Zn(2+)-binding site is contributed by histidine 79. The active site involves aspartate 81. Aspartate 111 is a binding site for Zn(2+). Residue glutamate 143 is part of the active site. Residues glutamate 144, glutamate 168, and histidine 354 each contribute to the Zn(2+) site.

It belongs to the peptidase M20A family. ArgE subfamily. Homodimer. It depends on Zn(2+) as a cofactor. Requires Co(2+) as cofactor. Glutathione serves as cofactor.

The protein localises to the cytoplasm. The catalysed reaction is N(2)-acetyl-L-ornithine + H2O = L-ornithine + acetate. Its pathway is amino-acid biosynthesis; L-arginine biosynthesis; L-ornithine from N(2)-acetyl-L-ornithine (linear): step 1/1. Functionally, catalyzes the hydrolysis of the amide bond of N(2)-acetylated L-amino acids. Cleaves the acetyl group from N-acetyl-L-ornithine to form L-ornithine, an intermediate in L-arginine biosynthesis pathway, and a branchpoint in the synthesis of polyamines. This chain is Acetylornithine deacetylase, found in Pasteurella multocida (strain Pm70).